Consider the following 117-residue polypeptide: Large ribosomal subunit protein bL20c (117 aa).

Belongs to the bacterial ribosomal protein bL20 family.

The protein resides in the plastid. It localises to the chloroplast. In terms of biological role, binds directly to 23S ribosomal RNA and is necessary for the in vitro assembly process of the 50S ribosomal subunit. It is not involved in the protein synthesizing functions of that subunit. This is Large ribosomal subunit protein bL20c from Acorus calamus (Sweet flag).